The sequence spans 167 residues: Transcription factor E (167 aa).

The 83-residue stretch at 8 to 90 (NDKVIRGYLI…LWHLDFSDVE (83 aa)) folds into the HTH TFE/IIEalpha-type domain.

It belongs to the TFE family. In terms of assembly, monomer. Interaction with RNA polymerase subunits RpoF and RpoE is necessary for Tfe stimulatory transcription activity. Able to interact with Tbp and RNA polymerase in the absence of DNA promoter. Interacts both with the preinitiation and elongation complexes.

Functionally, transcription factor that plays a role in the activation of archaeal genes transcribed by RNA polymerase. Facilitates transcription initiation by enhancing TATA-box recognition by TATA-box-binding protein (Tbp), and transcription factor B (Tfb) and RNA polymerase recruitment. Not absolutely required for transcription in vitro, but particularly important in cases where Tbp or Tfb function is not optimal. It dynamically alters the nucleic acid-binding properties of RNA polymerases by stabilizing the initiation complex and destabilizing elongation complexes. Seems to translocate with the RNA polymerase following initiation and acts by binding to the non template strand of the transcription bubble in elongation complexes. In Methanosarcina acetivorans (strain ATCC 35395 / DSM 2834 / JCM 12185 / C2A), this protein is Transcription factor E.